We begin with the raw amino-acid sequence, 168 residues long: uncharacterized protein (168 aa).

Residues Arg-18–Pro-73 are disordered. Residues Thr-55–Pro-64 are compositionally biased toward basic and acidic residues. 2 helical membrane passes run Ile-84 to Val-104 and Val-113 to Ile-133.

The protein localises to the membrane. This is an uncharacterized protein from Arabidopsis thaliana (Mouse-ear cress).